A 189-amino-acid chain; its full sequence is S-protein homolog 26 (189 aa).

Positions 1–25 (MISMNRLSILLFVFAFGLTMMSNTA) are cleaved as a signal peptide.

Belongs to the plant self-incompatibility (S1) protein family.

The protein resides in the secreted. The polypeptide is S-protein homolog 26 (Arabidopsis thaliana (Mouse-ear cress)).